The chain runs to 60 residues: Small integral membrane protein 3 (60 aa).

Residues 20-40 form a helical membrane-spanning segment; that stretch reads IWAIVLIILATVVIMTSLFLC.

The protein resides in the membrane. This is Small integral membrane protein 3 (Smim3) from Rattus norvegicus (Rat).